A 123-amino-acid polypeptide reads, in one-letter code: Small ribosomal subunit protein uS12cz/uS12cy (123 aa).

The protein belongs to the universal ribosomal protein uS12 family. Part of the 30S ribosomal subunit.

The protein resides in the plastid. It is found in the chloroplast. Its function is as follows. With S4 and S5 plays an important role in translational accuracy. Located at the interface of the 30S and 50S subunits. The polypeptide is Small ribosomal subunit protein uS12cz/uS12cy (rps12-A) (Phaseolus vulgaris (Kidney bean)).